A 478-amino-acid polypeptide reads, in one-letter code: Ribosomal RNA small subunit methyltransferase F (478 aa).

S-adenosyl-L-methionine-binding positions include 121–127 (ASAPGSK), glutamate 145, aspartate 172, and aspartate 190. Cysteine 243 acts as the Nucleophile in catalysis.

Belongs to the class I-like SAM-binding methyltransferase superfamily. RsmB/NOP family.

The protein resides in the cytoplasm. The catalysed reaction is cytidine(1407) in 16S rRNA + S-adenosyl-L-methionine = 5-methylcytidine(1407) in 16S rRNA + S-adenosyl-L-homocysteine + H(+). Functionally, specifically methylates the cytosine at position 1407 (m5C1407) of 16S rRNA. This chain is Ribosomal RNA small subunit methyltransferase F, found in Shewanella sediminis (strain HAW-EB3).